We begin with the raw amino-acid sequence, 84 residues long: U8-theraphotoxin-Hhn1f (84 aa).

The first 21 residues, 1–21 (MKVVLLVCLVWMMAMMELVSC), serve as a signal peptide directing secretion. Intrachain disulfides connect cysteine 23–cysteine 35, cysteine 29–cysteine 44, cysteine 34–cysteine 67, cysteine 54–cysteine 75, and cysteine 69–cysteine 81.

It belongs to the AVIT (prokineticin) family. In terms of tissue distribution, expressed by the venom gland.

It localises to the secreted. The chain is U8-theraphotoxin-Hhn1f from Cyriopagopus hainanus (Chinese bird spider).